We begin with the raw amino-acid sequence, 495 residues long: Cytochrome P450 94C1 (495 aa).

The helical transmembrane segment at 2-22 threads the bilayer; sequence LLIISFTIVSFFFIIIFSLFH. Cys-439 contributes to the heme binding site.

The protein belongs to the cytochrome P450 family. The cofactor is heme.

The protein resides in the membrane. Its subcellular location is the endoplasmic reticulum membrane. It carries out the reaction a 12-hydroxyjasmonyl-L-alpha-amino acid + 2 reduced [NADPH--hemoprotein reductase] + 2 O2 = a 12-hydroxy-12-oxojasmonyl-L-alpha-amino acid + 2 oxidized [NADPH--hemoprotein reductase] + 3 H2O + 3 H(+). Its function is as follows. Involved in the oxidation of the plant hormone jasmonoyl-L-isoleucine (JA-Ile), a bioactive phytohormone of the jasmonate-mediated signaling pathway. Converts 12-hydroxy-JA-Ile (12OH-JA-Ile) to the carboxy-derivative 12COOH-JA-Ile. Exerts negative feedback control on JA-Ile levels and plays a role in attenuation of jasmonate responses. Also functions as in-chain fatty acids hydroxylase in vitro. Catalyzes the hydroxylation of 12-hydroxy-jasmonoyl-L-phenylalanine (12OH-JA-Phe) in vitro. Converts 12OH-JA-Phe to the carboxy-derivative 12COOH-JA-Phe. The protein is Cytochrome P450 94C1 of Arabidopsis thaliana (Mouse-ear cress).